Here is a 326-residue protein sequence, read N- to C-terminus: Meso-diaminopimelate D-dehydrogenase (326 aa).

Residues 11–14, 35–37, 69–72, 92–94, and 121–125 contribute to the NADP(+) site; these read YGNL, TRR, CGGS, SFD, and VGWDP. Substrate-binding positions include aspartate 94, aspartate 124, tryptophan 148, 154-155, threonine 173, arginine 199, histidine 249, and asparagine 276; that span reads QG.

The protein belongs to the diaminopimelate dehydrogenase family. As to quaternary structure, homodimer.

It catalyses the reaction meso-2,6-diaminopimelate + NADP(+) + H2O = (S)-2-amino-6-oxoheptanedioate + NH4(+) + NADPH + H(+). The protein operates within amino-acid biosynthesis; L-lysine biosynthesis via DAP pathway; DL-2,6-diaminopimelate from (S)-tetrahydrodipicolinate: step 1/1. The enzyme is completely inhibited by p-chloromercuribenzoate and HgCl(2) in vitro. Thioglycollate, L-cysteine and Cu(2+) also strongly inhibit the enzyme. Its function is as follows. Catalyzes the reversible NADPH-dependent reductive amination of L-2-amino-6-oxopimelate, the acyclic form of L-tetrahydrodipicolinate, to generate the meso compound, D,L-2,6-diaminopimelate. Probably plays a role in lysine biosynthesis. Is highly specific for meso-2,6-diaminopimelate as the electron donor, since the following amino acids are inert for the oxidative deamination reaction: DL-2-aminopimelate, D-glutamate, L-glutamate, D-aspartate, L-aspartate, D-alanine, L-alanine, D-valine, L-valine, D-lysine, L-lysine, D-phenylalanine, L-phenylalanine, D-leucine, L-leucine, D-threonine, L-threonine, D-serine, L-serine, D-tryptophan, L-tryptophan, D-cysteine, L-cysteine, D-histidine, L-histidine, D-methionine, D-arginine, D-proline, D-asparagine, D-glutamine, D-isoleucine and D-ornithine. Moreover, exclusively uses NADP as the electron acceptor for the oxidative deamination of meso-DAP; NAD is inert. The protein is Meso-diaminopimelate D-dehydrogenase (ddh) of Ureibacillus thermosphaericus.